We begin with the raw amino-acid sequence, 299 residues long: Regucalcin (299 aa).

A divalent metal cation is bound at residue Glu-18. 3 residues coordinate substrate: Arg-101, Asn-103, and Glu-121. N6-succinyllysine is present on Lys-144. A divalent metal cation contacts are provided by Asn-154 and Asp-204. The Proton donor/acceptor role is filled by Asp-204. N6-succinyllysine is present on residues Lys-244 and Lys-253.

Belongs to the SMP-30/CGR1 family. Monomer. Requires Zn(2+) as cofactor. Mn(2+) is required as a cofactor. The cofactor is Ca(2+). Mg(2+) serves as cofactor.

The protein localises to the cytoplasm. The catalysed reaction is D-glucono-1,5-lactone + H2O = D-gluconate + H(+). The protein operates within cofactor biosynthesis; L-ascorbate biosynthesis via UDP-alpha-D-glucuronate pathway; L-ascorbate from UDP-alpha-D-glucuronate: step 3/4. Gluconolactonase with low activity towards other sugar lactones, including gulonolactone and galactonolactone. Catalyzes a key step in ascorbic acid (vitamin C) biosynthesis. Can also hydrolyze diisopropyl phosphorofluoridate and phenylacetate (in vitro). Calcium-binding protein. Modulates Ca(2+) signaling, and Ca(2+)-dependent cellular processes and enzyme activities. This Oryctolagus cuniculus (Rabbit) protein is Regucalcin (RGN).